Here is an 86-residue protein sequence, read N- to C-terminus: Exodeoxyribonuclease 7 small subunit (86 aa).

Residues 1-26 (MQDELFETEKAPQKNTKNAKNAPKKS) form a disordered region.

The protein belongs to the XseB family. Heterooligomer composed of large and small subunits.

The protein localises to the cytoplasm. It carries out the reaction Exonucleolytic cleavage in either 5'- to 3'- or 3'- to 5'-direction to yield nucleoside 5'-phosphates.. In terms of biological role, bidirectionally degrades single-stranded DNA into large acid-insoluble oligonucleotides, which are then degraded further into small acid-soluble oligonucleotides. In Helicobacter pylori (strain Shi470), this protein is Exodeoxyribonuclease 7 small subunit.